Reading from the N-terminus, the 341-residue chain is 4-hydroxy-2-oxovalerate aldolase 2 (341 aa).

The Pyruvate carboxyltransferase domain maps to 8–260; sequence VTVHDMTLRD…ETGVDVAKIT (253 aa). Residue 16 to 17 participates in substrate binding; the sequence is RD. Asp17 contacts Mn(2+). The active-site Proton acceptor is the His20. Substrate is bound by residues Ser170 and His199. Positions 199 and 201 each coordinate Mn(2+). A substrate-binding site is contributed by Tyr290.

It belongs to the 4-hydroxy-2-oxovalerate aldolase family.

It catalyses the reaction (S)-4-hydroxy-2-oxopentanoate = acetaldehyde + pyruvate. This Dechloromonas aromatica (strain RCB) protein is 4-hydroxy-2-oxovalerate aldolase 2.